The sequence spans 529 residues: Bifunctional purine biosynthesis protein PurH (529 aa).

Positions 1-148 (MQQRRPVRRA…KNHKDVAIVV (148 aa)) constitute an MGS-like domain. K287 is modified (N6-acetyllysine).

This sequence belongs to the PurH family.

The catalysed reaction is (6R)-10-formyltetrahydrofolate + 5-amino-1-(5-phospho-beta-D-ribosyl)imidazole-4-carboxamide = 5-formamido-1-(5-phospho-D-ribosyl)imidazole-4-carboxamide + (6S)-5,6,7,8-tetrahydrofolate. It carries out the reaction IMP + H2O = 5-formamido-1-(5-phospho-D-ribosyl)imidazole-4-carboxamide. The protein operates within purine metabolism; IMP biosynthesis via de novo pathway; 5-formamido-1-(5-phospho-D-ribosyl)imidazole-4-carboxamide from 5-amino-1-(5-phospho-D-ribosyl)imidazole-4-carboxamide (10-formyl THF route): step 1/1. It participates in purine metabolism; IMP biosynthesis via de novo pathway; IMP from 5-formamido-1-(5-phospho-D-ribosyl)imidazole-4-carboxamide: step 1/1. The protein is Bifunctional purine biosynthesis protein PurH of Escherichia coli O127:H6 (strain E2348/69 / EPEC).